A 445-amino-acid chain; its full sequence is ATP-dependent protease ATPase subunit HslU (445 aa).

Residues Val-18, 60–65 (GVGKTE), Asp-254, Glu-319, and Arg-391 contribute to the ATP site.

Belongs to the ClpX chaperone family. HslU subfamily. A double ring-shaped homohexamer of HslV is capped on each side by a ring-shaped HslU homohexamer. The assembly of the HslU/HslV complex is dependent on binding of ATP.

It localises to the cytoplasm. Its function is as follows. ATPase subunit of a proteasome-like degradation complex; this subunit has chaperone activity. The binding of ATP and its subsequent hydrolysis by HslU are essential for unfolding of protein substrates subsequently hydrolyzed by HslV. HslU recognizes the N-terminal part of its protein substrates and unfolds these before they are guided to HslV for hydrolysis. In Alcanivorax borkumensis (strain ATCC 700651 / DSM 11573 / NCIMB 13689 / SK2), this protein is ATP-dependent protease ATPase subunit HslU.